Consider the following 310-residue polypeptide: Proline iminopeptidase (310 aa).

The 258-residue stretch at 33–290 (PVIFLHGGPG…RVVQAGHRAF (258 aa)) folds into the AB hydrolase-1 domain. Catalysis depends on serine 107, which acts as the Nucleophile. Aspartate 260 is a catalytic residue. Histidine 287 (proton donor) is an active-site residue.

The protein belongs to the peptidase S33 family.

It localises to the cytoplasm. The enzyme catalyses Release of N-terminal proline from a peptide.. Specifically catalyzes the removal of N-terminal proline residues from peptides. The protein is Proline iminopeptidase (pip) of Neisseria meningitidis serogroup A / serotype 4A (strain DSM 15465 / Z2491).